A 295-amino-acid polypeptide reads, in one-letter code: HTH-type transcriptional regulator TdfR (295 aa).

Residues 1-58 (MEFRQLRYFVAAAEEGNVGAAARRLHISQPPVTRQIHALEQHLGVLLFERSARGVQLT) enclose the HTH lysR-type domain. A DNA-binding region (H-T-H motif) is located at residues 18-37 (VGAAARRLHISQPPVTRQIH).

The protein belongs to the LysR transcriptional regulatory family.

The protein resides in the cytoplasm. In terms of biological role, involved in the regulation of 3-chlorocatechol degradation. Transcriptional regulator of tfdB expression. Acts as a repressor in the absence of its effector (either 2-cis-chlorodiene lactone or chloromaleylacetate) but acts as an activator when its effector is present. This chain is HTH-type transcriptional regulator TdfR (tfdR), found in Cupriavidus pinatubonensis (strain JMP 134 / LMG 1197) (Cupriavidus necator (strain JMP 134)).